A 216-amino-acid polypeptide reads, in one-letter code: MTKKYSLGFVGRKAGMSRIFTEDGRSVPVTLIEATPNRIAQIKTVEVDGYSAVQITVGARRAALVNKPAAGHFAKAKVEAGRGLWEFRVEDAHLGDFAVGGEIKADIFEVGQKVDVQGVTKGKGFQGTIKRYNFRMGDATHGNSLSHRAPGSLGQRQTPGRVFPGKKMSGHMGAVQQSTQNLEVVKVDVERGLIAIHGAVPGAAGGDVIVRPASKA.

An N5-methylglutamine modification is found at Gln157.

Belongs to the universal ribosomal protein uL3 family. As to quaternary structure, part of the 50S ribosomal subunit. Forms a cluster with proteins L14 and L19. In terms of processing, methylated by PrmB.

One of the primary rRNA binding proteins, it binds directly near the 3'-end of the 23S rRNA, where it nucleates assembly of the 50S subunit. This chain is Large ribosomal subunit protein uL3, found in Xanthomonas oryzae pv. oryzae (strain MAFF 311018).